Consider the following 285-residue polypeptide: Acetyl-coenzyme A carboxylase carboxyl transferase subunit beta (285 aa).

Residues 22-285 (LWTKCEACGA…HPGVAYAPGV (264 aa)) form the CoA carboxyltransferase N-terminal domain. Cysteine 26, cysteine 29, cysteine 45, and cysteine 48 together coordinate Zn(2+). The segment at 26–48 (CEACGAQIYKKEFQENLHVCPKC) adopts a C4-type zinc-finger fold.

Belongs to the AccD/PCCB family. In terms of assembly, acetyl-CoA carboxylase is a heterohexamer composed of biotin carboxyl carrier protein (AccB), biotin carboxylase (AccC) and two subunits each of ACCase subunit alpha (AccA) and ACCase subunit beta (AccD). Zn(2+) serves as cofactor.

It is found in the cytoplasm. It carries out the reaction N(6)-carboxybiotinyl-L-lysyl-[protein] + acetyl-CoA = N(6)-biotinyl-L-lysyl-[protein] + malonyl-CoA. It participates in lipid metabolism; malonyl-CoA biosynthesis; malonyl-CoA from acetyl-CoA: step 1/1. Its function is as follows. Component of the acetyl coenzyme A carboxylase (ACC) complex. Biotin carboxylase (BC) catalyzes the carboxylation of biotin on its carrier protein (BCCP) and then the CO(2) group is transferred by the transcarboxylase to acetyl-CoA to form malonyl-CoA. The chain is Acetyl-coenzyme A carboxylase carboxyl transferase subunit beta from Thermus thermophilus (strain ATCC 27634 / DSM 579 / HB8).